Here is a 228-residue protein sequence, read N- to C-terminus: Probable C4-dicarboxylate response regulator DctR (228 aa).

The Response regulatory domain maps to 7 to 123; that stretch reads TVLLIEDDPM…RMKQALEQYR (117 aa). D58 is modified (4-aspartylphosphate). The H-T-H motif DNA-binding region spans 180–199; the sequence is AEEVADGVGIARVTARRYLE.

Phosphorylated by DctS.

Its subcellular location is the cytoplasm. Functionally, member of the two-component regulatory system DctS/DctR. Essential for expression of DctP. This chain is Probable C4-dicarboxylate response regulator DctR (dctR), found in Priestia megaterium (Bacillus megaterium).